The chain runs to 395 residues: S-adenosylmethionine synthase (395 aa).

An ATP-binding site is contributed by His-16. Residue Asp-18 participates in Mg(2+) binding. A K(+)-binding site is contributed by Glu-44. L-methionine-binding residues include Glu-57 and Gln-100. A flexible loop region spans residues 100–110 (QSPDIAQGVDR). ATP contacts are provided by residues 167-169 (DAK), 233-234 (RF), Asp-242, 248-249 (RK), Ala-265, and Lys-269. Asp-242 provides a ligand contact to L-methionine. Lys-273 contributes to the L-methionine binding site.

The protein belongs to the AdoMet synthase family. Homotetramer; dimer of dimers. Requires Mg(2+) as cofactor. The cofactor is K(+).

The protein localises to the cytoplasm. The enzyme catalyses L-methionine + ATP + H2O = S-adenosyl-L-methionine + phosphate + diphosphate. It functions in the pathway amino-acid biosynthesis; S-adenosyl-L-methionine biosynthesis; S-adenosyl-L-methionine from L-methionine: step 1/1. Functionally, catalyzes the formation of S-adenosylmethionine (AdoMet) from methionine and ATP. The overall synthetic reaction is composed of two sequential steps, AdoMet formation and the subsequent tripolyphosphate hydrolysis which occurs prior to release of AdoMet from the enzyme. This Burkholderia ambifaria (strain MC40-6) protein is S-adenosylmethionine synthase.